Here is a 538-residue protein sequence, read N- to C-terminus: MSMPIASTTLAVNNLTNINGNANFNVQANKQLHHQAVDSPARSSMTATTAANSNSNSSRDDSTIVGLHYKIGKKIGEGSFGVLFEGTNMINGVPVAIKFEPRKTEAPQLRDEYKTYKILNGTPNIPYAYYFGQEGLHNILVIDLLGPSLEDLFDWCGRKFSVKTVVQVAVQMITLIEDLHAHDLIYRDIKPDNFLIGRPGQPDANNIHLIDFGMAKQYRDPKTKQHIPYREKKSLSGTARYMSINTHLGREQSRRDDMEALGHVFFYFLRGHLPWQGLKAPNNKQKYEKIGEKKRSTNVYDLAQGLPVQFGRYLEIVRSLSFEECPDYEGYRKLLLSVLDDLGETADGQYDWMKLNDGRGWDLNINKKPNLHGYGHPNPPNEKSRKHRNKQLQMQQLQMQQLQQQQQQQQYAQKTEADMRNSQYKPKLDPTSYEAYQHQTQQKYLQEQQKRQQQQKLQEQQLQEQQLQQQQQQQQQLRATGQPPSQPQAQTQSQQFGARYQPQQQPSAALRTPEQHPNDDNSSLAASHKGFFQKLGCC.

Residues 39 to 61 are disordered; it reads SPARSSMTATTAANSNSNSSRDD. The span at 41 to 57 shows a compositional bias: low complexity; it reads ARSSMTATTAANSNSNS. Positions 69 to 353 constitute a Protein kinase domain; it reads YKIGKKIGEG…ETADGQYDWM (285 aa). Residues 75-83 and lysine 98 contribute to the ATP site; that span reads IGEGSFGVL. Aspartate 188 serves as the catalytic Proton acceptor. 2 disordered regions span residues 366–428 and 474–527; these read NKKP…KPKL and QQQL…LAAS. 2 stretches are compositionally biased toward low complexity: residues 391–410 and 474–498; these read QLQMQQLQMQQLQQQQQQQQ and QQQLRATGQPPSQPQAQTQSQQFGA. 3 positions are modified to phosphoserine: serine 522, serine 523, and serine 527. 2 S-palmitoyl cysteine lipidation sites follow: cysteine 537 and cysteine 538.

The protein belongs to the protein kinase superfamily. CK1 Ser/Thr protein kinase family. Casein kinase I subfamily. Palmitoylated by AKR1.

Its subcellular location is the cell membrane. It is found in the mitochondrion membrane. The enzyme catalyses L-seryl-[protein] + ATP = O-phospho-L-seryl-[protein] + ADP + H(+). It carries out the reaction L-threonyl-[protein] + ATP = O-phospho-L-threonyl-[protein] + ADP + H(+). Casein kinases are operationally defined by their preferential utilization of acidic proteins such as caseins as substrates. This chain is Casein kinase I homolog 1 (YCK1), found in Saccharomyces cerevisiae (strain ATCC 204508 / S288c) (Baker's yeast).